The primary structure comprises 798 residues: ATP-dependent RecD2 DNA helicase (798 aa).

370 to 374 (GTGKT) is an ATP binding site.

The protein belongs to the RecD family. RecD2 subfamily. As to quaternary structure, interacts with SSB (sbbA).

Its subcellular location is the cytoplasm. It is found in the nucleoid. The catalysed reaction is Couples ATP hydrolysis with the unwinding of duplex DNA at the replication fork by translocating in the 5'-3' direction. This creates two antiparallel DNA single strands (ssDNA). The leading ssDNA polymer is the template for DNA polymerase III holoenzyme which synthesizes a continuous strand.. It carries out the reaction ATP + H2O = ADP + phosphate + H(+). In vivo may favor replication restart by preventing RecA from binding to blocked replication forks, avoiding unnecessary recombination during replication restart. Acts as a negative modulator of the RecA-ssDNA filament, may dissasemble RecA threads, can act as both a positive and negative regulator of strand exchange. Probably stabilizes or aids normal replication fork progression, is important for survival after treatment with DNA-damaging agents that can result in replication fork stress. Overcomes the inhibition of replication restart by RecA/RecO, probably by displacing RecA. Increasing levels inhibit PriA-dependent DNA replication initiation (but have little effect on ongoing replication) in vitro; may act by disturbing SsbA assembly. Probably has a role in recombinational DNA repair. Does not seem to contribute to mismatch repair. Has 5'-3' helicase activity that is probably ATP-dependent. This chain is ATP-dependent RecD2 DNA helicase, found in Bacillus subtilis (strain 168).